A 132-amino-acid chain; its full sequence is uncharacterized protein (132 aa).

The N-terminal stretch at 1-35 (MSFEYRHYKREAKICTCRGGWAHVLLCIGVSQGAC) is a signal peptide. The segment at 91 to 132 (AHPGSHSDQPPGVPSRRKSRLERWSPSVSRSTSPPTEAPFCL) is disordered. Positions 115–125 (SPSVSRSTSPP) are enriched in low complexity.

It is found in the secreted. This is an uncharacterized protein from Homo sapiens (Human).